Here is a 304-residue protein sequence, read N- to C-terminus: Acetyl-coenzyme A carboxylase carboxyl transferase subunit beta (304 aa).

Residues 52–304 form the CoA carboxyltransferase N-terminal domain; it reads EVTKCPSCGV…TIFKVLNDII (253 aa). Zn(2+) is bound by residues cysteine 56, cysteine 59, cysteine 75, and cysteine 78. The C4-type zinc finger occupies 56-78; it reads CPSCGVLSHKSEIRANMKMCSNC.

This sequence belongs to the AccD/PCCB family. As to quaternary structure, acetyl-CoA carboxylase is a heterohexamer composed of biotin carboxyl carrier protein (AccB), biotin carboxylase (AccC) and two subunits each of ACCase subunit alpha (AccA) and ACCase subunit beta (AccD). The cofactor is Zn(2+).

Its subcellular location is the cytoplasm. The catalysed reaction is N(6)-carboxybiotinyl-L-lysyl-[protein] + acetyl-CoA = N(6)-biotinyl-L-lysyl-[protein] + malonyl-CoA. The protein operates within lipid metabolism; malonyl-CoA biosynthesis; malonyl-CoA from acetyl-CoA: step 1/1. In terms of biological role, component of the acetyl coenzyme A carboxylase (ACC) complex. Biotin carboxylase (BC) catalyzes the carboxylation of biotin on its carrier protein (BCCP) and then the CO(2) group is transferred by the transcarboxylase to acetyl-CoA to form malonyl-CoA. The polypeptide is Acetyl-coenzyme A carboxylase carboxyl transferase subunit beta (Fusobacterium nucleatum subsp. nucleatum (strain ATCC 25586 / DSM 15643 / BCRC 10681 / CIP 101130 / JCM 8532 / KCTC 2640 / LMG 13131 / VPI 4355)).